A 332-amino-acid polypeptide reads, in one-letter code: Glyceraldehyde-3-phosphate dehydrogenase 2 (332 aa).

NAD(+) is bound by residues arginine 11, isoleucine 12, and aspartate 33. Residues lysine 46 and lysine 63 each participate in a glycyl lysine isopeptide (Lys-Gly) (interchain with G-Cter in ubiquitin) cross-link. Threonine 120 is an NAD(+) binding site. D-glyceraldehyde 3-phosphate is bound by residues 149-151, threonine 180, 209-210, and arginine 232; these read SCT and TG. The active-site Nucleophile is cysteine 150. Serine 302 carries the phosphoserine modification. NAD(+)-binding residues include asparagine 314 and tyrosine 318.

It belongs to the glyceraldehyde-3-phosphate dehydrogenase family. Homotetramer.

The protein localises to the cytoplasm. It carries out the reaction D-glyceraldehyde 3-phosphate + phosphate + NAD(+) = (2R)-3-phospho-glyceroyl phosphate + NADH + H(+). The catalysed reaction is NADH + H2O = (6R)-NADHX. It catalyses the reaction NADH + H2O = (6S)-NADHX. The enzyme catalyses NADPH + H2O = (6R)-NADPHX. It carries out the reaction NADPH + H2O = (6S)-NADPHX. The protein operates within carbohydrate degradation; glycolysis; pyruvate from D-glyceraldehyde 3-phosphate: step 1/5. Glyceraldehyde-3-phosphate dehydrogenase (GAPDH) involved in glycolysis and gluconeogenesis. Catalyzes the reaction of glyceraldehyde-3-phosphate to 1,3 bis-phosphoglycerate. The contribution of the TDH1, TDH2, and TDH3 to the total glyceraldehyde-3-phosphate dehydrogenase activity is 10-15, 25-30, and 50-60%, respectively. In terms of biological role, as a side activity, catalyzes the hydration of the nicotinamide ring of NADH or NADPH at the C6 position to give the corresponding hydrates, NADHX and NADPHX, which exist as R and S epimers, that cannot act as electron donors or acceptors and inhibit several dehydrogenases, making them toxic. The polypeptide is Glyceraldehyde-3-phosphate dehydrogenase 2 (Saccharomyces cerevisiae (strain ATCC 204508 / S288c) (Baker's yeast)).